The primary structure comprises 191 residues: Protein GrpE (191 aa).

A compositionally biased stretch (polar residues) spans 1 to 14; that stretch reads MEDQKQTPSNQTAT. The segment at 1–35 is disordered; that stretch reads MEDQKQTPSNQTATPAGDEATSTAAASPETGAPDT. A compositionally biased stretch (low complexity) spans 19–35; it reads EATSTAAASPETGAPDT.

This sequence belongs to the GrpE family. In terms of assembly, homodimer.

The protein resides in the cytoplasm. Functionally, participates actively in the response to hyperosmotic and heat shock by preventing the aggregation of stress-denatured proteins, in association with DnaK and GrpE. It is the nucleotide exchange factor for DnaK and may function as a thermosensor. Unfolded proteins bind initially to DnaJ; upon interaction with the DnaJ-bound protein, DnaK hydrolyzes its bound ATP, resulting in the formation of a stable complex. GrpE releases ADP from DnaK; ATP binding to DnaK triggers the release of the substrate protein, thus completing the reaction cycle. Several rounds of ATP-dependent interactions between DnaJ, DnaK and GrpE are required for fully efficient folding. This chain is Protein GrpE, found in Cupriavidus taiwanensis (strain DSM 17343 / BCRC 17206 / CCUG 44338 / CIP 107171 / LMG 19424 / R1) (Ralstonia taiwanensis (strain LMG 19424)).